The following is a 461-amino-acid chain: tRNA modification GTPase MnmE (461 aa).

3 residues coordinate (6S)-5-formyl-5,6,7,8-tetrahydrofolate: R23, E84, and K123. The TrmE-type G domain maps to 219–382 (GVQVVIGGRP…LLDHLTDTVA (164 aa)). Residues 229 to 234 (NAGKST), 248 to 254 (SETPGTT), 273 to 276 (DTAG), and 337 to 340 (NKAD) each bind GTP. The Mg(2+) site is built by S233 and T254. K461 provides a ligand contact to (6S)-5-formyl-5,6,7,8-tetrahydrofolate.

This sequence belongs to the TRAFAC class TrmE-Era-EngA-EngB-Septin-like GTPase superfamily. TrmE GTPase family. Homodimer. Heterotetramer of two MnmE and two MnmG subunits. K(+) serves as cofactor.

It is found in the cytoplasm. Functionally, exhibits a very high intrinsic GTPase hydrolysis rate. Involved in the addition of a carboxymethylaminomethyl (cmnm) group at the wobble position (U34) of certain tRNAs, forming tRNA-cmnm(5)s(2)U34. The chain is tRNA modification GTPase MnmE from Salinibacter ruber (strain DSM 13855 / M31).